The primary structure comprises 333 residues: Nucleoid-associated protein VV1_3120 (333 aa).

Belongs to the YejK family.

The protein localises to the cytoplasm. The protein resides in the nucleoid. The sequence is that of Nucleoid-associated protein VV1_3120 from Vibrio vulnificus (strain CMCP6).